A 163-amino-acid chain; its full sequence is Single-stranded DNA-binding protein 2 (163 aa).

The region spanning 1 to 104 (MINNVVLVGR…VVADNFQMLE (104 aa)) is the SSB domain. Residues 109-163 (REGGSTGSFNGGFNNNTSSSNSYSAPAQQTPNFGRDDSPFGNSNPMDISDDDLPF) form a disordered region. The segment covering 119–130 (GGFNNNTSSSNS) has biased composition (low complexity). The span at 131-140 (YSAPAQQTPN) shows a compositional bias: polar residues. The Important for interaction with partner proteins signature appears at 158–163 (DDDLPF).

As to quaternary structure, homotetramer.

Functionally, plays an important role in DNA replication, recombination and repair. Binds to ssDNA and to an array of partner proteins to recruit them to their sites of action during DNA metabolism. The sequence is that of Single-stranded DNA-binding protein 2 (ssb2) from Streptococcus pyogenes serotype M6 (strain ATCC BAA-946 / MGAS10394).